We begin with the raw amino-acid sequence, 24 residues long: Unknown protein 3 (24 aa).

The sequence is that of Unknown protein 3 from Pseudotsuga menziesii (Douglas-fir).